Consider the following 664-residue polypeptide: Translation factor guf1, mitochondrial (664 aa).

Residues 1–43 (MRGCLQLARWLSAGPKCPAASLPKAPSGLYNTIRSFTSSAQLA) constitute a mitochondrion transit peptide. A tr-type G domain is found at 66–246 (DRYRNFCIVA…TVVEKIPAPV (181 aa)). GTP-binding positions include 75 to 82 (AHVDHGKS), 139 to 143 (DTPGH), and 193 to 196 (NKVD).

This sequence belongs to the TRAFAC class translation factor GTPase superfamily. Classic translation factor GTPase family. LepA subfamily.

The protein resides in the mitochondrion inner membrane. The catalysed reaction is GTP + H2O = GDP + phosphate + H(+). Promotes mitochondrial protein synthesis. May act as a fidelity factor of the translation reaction, by catalyzing a one-codon backward translocation of tRNAs on improperly translocated ribosomes. Binds to mitochondrial ribosomes in a GTP-dependent manner. This Aspergillus oryzae (strain ATCC 42149 / RIB 40) (Yellow koji mold) protein is Translation factor guf1, mitochondrial (guf1).